Consider the following 568-residue polypeptide: MGCSVVGNCKSVMLMSRMSWSKLALLISVAMAAAMTDSPPTLICMGILVSVVLNWIVCAVCEEASELILGVSLETTRPSPARVIGEPVFDPRYGYVAPAIYDGKSFDVILPISALSSASTRKETVEMAVENSRLQPLESSQTPKSLVALYSQDLLSGWGSRIKGPDGQEYLLTALHVWETNISHLCKDGKKVPISGCPIVASSADSDLDFVLVSVPKNAWSVLGVGVARLELLKRRTVVTVYGGLDSKTTYCATGVAELENPFRIVTKVTTTGGWSGSPLYHKDAIVGLHLGARPSAGVNRACNVAMAFRVVRKFVTVENSELYPDQSSGPARELDAETYTERLEQGIAFTEYNISGITVKTSDREWTTAEALRVARYKPLGGGKAWGDSDDEDTQETAIRPLNYQRAGSLRGSPPLANLSSTRATSGVTKESSIPTACLSDPLESRVAGLEKLCAERFTEMFELLRQSSQNSKSSLGQAADRKQKSDRSSSKPEGLKESKRPPICNWQSLTSKPSTRGPDPAPVSAESPGVVKTSSQKSKRSRTRGKSTSRQVPASPSPKSGSATSK.

Helical transmembrane passes span 10 to 30 (KSVM…ISVA) and 41 to 61 (TLIC…CAVC). In terms of domain architecture, Peptidase S39 spans 129–326 (VENSRLQPLE…TVENSELYPD (198 aa)). Active-site for protease activity residues include H176, D209, and S276. T339 is subject to Phosphothreonine; by host. Position 390 is a phosphoserine; by host (S390). Disordered stretches follow at residues 403–435 (LNYQ…ESSI) and 469–568 (SSQN…ATSK). 2 stretches are compositionally biased toward polar residues: residues 419–435 (NLSS…ESSI) and 469–478 (SSQNSKSSLG). The segment covering 481–502 (ADRKQKSDRSSSKPEGLKESKR) has biased composition (basic and acidic residues). A compositionally biased stretch (polar residues) spans 507–516 (NWQSLTSKPS). The span at 539 to 549 (KSKRSRTRGKS) shows a compositional bias: basic residues. Residues 554–568 (VPASPSPKSGSATSK) show a composition bias toward polar residues.

It is found in the host membrane. Responsible for cleavages of polyprotein P2A and replicase polyprotein P2AB. In terms of biological role, covalently attached to the 5' extremity of the genomic and subgenomic RNAs. It may serve as a primer for the replicase. The protein is Polyprotein P2A of Cocksfoot mottle virus (isolate Dactylis glomerata/Norway/CfMV-NO/1995) (CfMV).